Here is a 431-residue protein sequence, read N- to C-terminus: Na(+)-translocating NADH-quinone reductase subunit F (431 aa).

The chain crosses the membrane as a helical span at residues 10 to 30 (IFIASTAFCALGLLLVAIILL). The 2Fe-2S ferredoxin-type domain maps to 41 to 133 (CKLRINNDDS…DMNLEIEERY (93 aa)). Positions 76, 82, 85, and 117 each coordinate [2Fe-2S] cluster. Positions 136 to 286 (ASSWEGTVVS…SGPYGESFMK (151 aa)) constitute an FAD-binding FR-type domain. A catalytic region spans residues 289 to 413 (NRPVIFLIGG…ALHNSSILTL (125 aa)).

It belongs to the NqrF family. Composed of six subunits; NqrA, NqrB, NqrC, NqrD, NqrE and NqrF. The cofactor is [2Fe-2S] cluster. It depends on FAD as a cofactor.

It localises to the cell inner membrane. The enzyme catalyses a ubiquinone + n Na(+)(in) + NADH + H(+) = a ubiquinol + n Na(+)(out) + NAD(+). Functionally, NQR complex catalyzes the reduction of ubiquinone-1 to ubiquinol by two successive reactions, coupled with the transport of Na(+) ions from the cytoplasm to the periplasm. The first step is catalyzed by NqrF, which accepts electrons from NADH and reduces ubiquinone-1 to ubisemiquinone by a one-electron transfer pathway. In Chlamydia muridarum (strain MoPn / Nigg), this protein is Na(+)-translocating NADH-quinone reductase subunit F.